Consider the following 531-residue polypeptide: Membrane protein insertase YidC (531 aa).

4 helical membrane passes run 5–25 (ALIAVVLSILFFYGYTALFSP), 343–363 (GNYGIAIIIITVIIKVIFYPL), 415–435 (LPMLVQIPVFFALYKALMFSI), and 489–509 (PVVFTFMFLNFPSGLVLYWLV).

The protein belongs to the OXA1/ALB3/YidC family. Type 1 subfamily. Interacts with the Sec translocase complex via SecD. Specifically interacts with transmembrane segments of nascent integral membrane proteins during membrane integration.

The protein resides in the cell inner membrane. Required for the insertion and/or proper folding and/or complex formation of integral membrane proteins into the membrane. Involved in integration of membrane proteins that insert both dependently and independently of the Sec translocase complex, as well as at least some lipoproteins. Aids folding of multispanning membrane proteins. In Geobacter sulfurreducens (strain ATCC 51573 / DSM 12127 / PCA), this protein is Membrane protein insertase YidC.